A 526-amino-acid polypeptide reads, in one-letter code: Peptide chain release factor 3 (526 aa).

Residues 8-277 (GKRRTFAIIS…GLTDWAPAPQ (270 aa)) form the tr-type G domain. Residues 17-24 (SHPDAGKT), 85-89 (DTPGH), and 139-142 (NKLD) contribute to the GTP site.

Belongs to the TRAFAC class translation factor GTPase superfamily. Classic translation factor GTPase family. PrfC subfamily.

Its subcellular location is the cytoplasm. Its function is as follows. Increases the formation of ribosomal termination complexes and stimulates activities of RF-1 and RF-2. It binds guanine nucleotides and has strong preference for UGA stop codons. It may interact directly with the ribosome. The stimulation of RF-1 and RF-2 is significantly reduced by GTP and GDP, but not by GMP. This chain is Peptide chain release factor 3, found in Aliivibrio fischeri (strain ATCC 700601 / ES114) (Vibrio fischeri).